We begin with the raw amino-acid sequence, 385 residues long: MTVVPVTSADLDAAEVSWFSALCSDDYAYLGVPDGSLRSSFEHCSDIVKKAEELGFRNILCPSSYQVGQDTLSFVAGCAPISDRINFLAAIRCGEMQPIMLARTVATLDHMLKGRLTLNVISSDFPGEVADSAFRYKRSHEVVEILRQAWTRDTIDHDGEIYQFKGVSTEPARPYQLNGGPLLYFGGYSPDALELCGAQCDVYLMWPETKDQLADRMRAAHERAAAHGRTLDYGLRVHMVVRDTEQEAREYADHLVSKLDDEYGQLIRNRAHDSGSLGVSHQARARELADKFGYVEPNLWTGIGRARSGCGAALVGSTDQVLSALEEYQKMGIRAFILSGYPHLDEAEHFGTKVLPQMKTCSLPHAYGRVPSETPATPLGNGERH.

The disordered stretch occupies residues 366-385 (AYGRVPSETPATPLGNGERH).

This sequence belongs to the SsuD family. As to quaternary structure, homodimer.

The enzyme catalyses 6-sulfo-D-quinovose + FMNH2 + O2 = 6-dehydro-D-glucose + FMN + sulfite + H2O + 2 H(+). Its function is as follows. Part of the sulfoquinovose monooxygenase (sulfo-SMO) pathway, a D-sulfoquinovose degradation pathway that enables the complete utilization of all carbons within sulfoquinovose (SQ) with concomitant production of inorganic sulfite. Catalyzes the oxidative desulfurization of sulfoquinovose to sulfite and 6-dehydro-D-glucose. Is highly specific for sulfoquinovose and cannot use sulfoquinovosyl glycerol. FMNH(2) is provided by the FMN reductase SmoA. The sequence is that of Sulfoquinovose monooxygenase from Agrobacterium fabrum (strain C58 / ATCC 33970) (Agrobacterium tumefaciens (strain C58)).